The chain runs to 320 residues: RNA polymerase sigma factor SigA2 (320 aa).

Residues 89 to 159 (MIEANLRLVV…TRAIAQQSRT (71 aa)) are sigma-70 factor domain-2. Positions 113 to 116 (DLIQ) match the Interaction with polymerase core subunit RpoC motif. The segment at 168 to 243 (EKLNKLKKTQ…EDEQSSPSDY (76 aa)) is sigma-70 factor domain-3. The segment at 256–310 (LMAELTPQQQAVIALRYGLDEGDSLSLAKVGERLNISRERVRKLERQAMDHLRRR) is sigma-70 factor domain-4. Residues 282–301 (LAKVGERLNISRERVRKLER) constitute a DNA-binding region (H-T-H motif).

This sequence belongs to the sigma-70 factor family.

The protein resides in the cytoplasm. Sigma factors are initiation factors that promote the attachment of RNA polymerase to specific initiation sites and are then released. This sigma factor is a component of the biological clock pathway that affects the circadian expression of a subset of genes in this bacterium. This is RNA polymerase sigma factor SigA2 (sigA2) from Synechococcus elongatus (strain ATCC 33912 / PCC 7942 / FACHB-805) (Anacystis nidulans R2).